The sequence spans 922 residues: Golgi-associated RAB2 interactor protein 5B (922 aa).

Disordered regions lie at residues 244–264, 292–317, 373–404, 424–597, 758–830, and 842–869; these read DVRKKPAEKKSHSDPRPDRTH, QSSPKACTSASDEATGQGHVVESPSH, TPYSSIPRGREKAGPMGSHQGPGPPPCQKAPS, AVPA…TQET, QPES…LRPS, and ATARASQQPKRVSQEPMRMPAQHPLATV. Polar residues predominate over residues 292 to 305; it reads QSSPKACTSASDEA. The segment covering 431–441 has biased composition (pro residues); the sequence is KPPPGLAPPQK. 2 stretches are compositionally biased toward low complexity: residues 442-458 and 471-495; these read APAASAPPRKAPAVPAP and KAPAIPAPSRKASAASASPRKASAV. Residues 496 to 507 show a composition bias toward pro residues; it reads PAPPQKTPPPSQ. Residues 758–788 show a composition bias toward basic and acidic residues; it reads QPESHTWVKEGKRPWGEMKEQPWGEMKEPPW.

The protein belongs to the GARIN family.

This Homo sapiens (Human) protein is Golgi-associated RAB2 interactor protein 5B.